Here is a 314-residue protein sequence, read N- to C-terminus: Olfactory receptor 52K2 (314 aa).

The Extracellular portion of the chain corresponds to M1 to I27. An N-linked (GlcNAc...) asparagine glycan is attached at N5. Residues W28–L48 traverse the membrane as a helical segment. At L49–A56 the chain is on the cytoplasmic side. The chain crosses the membrane as a helical span at residues L57–S77. Residues S78 to A101 lie on the Extracellular side of the membrane. C99 and C191 are disulfide-bonded. Residues Q102–F122 form a helical membrane-spanning segment. The Cytoplasmic segment spans residues D123–S141. A helical transmembrane segment spans residues L142 to P162. Topologically, residues F163–N198 are extracellular. A helical membrane pass occupies residues I199–S219. Over Y220–A239 the chain is Cytoplasmic. The chain crosses the membrane as a helical span at residues F240–S260. Residues S261 to H275 are Extracellular-facing. Residues I276–V296 form a helical membrane-spanning segment. Over K297–M314 the chain is Cytoplasmic.

This sequence belongs to the G-protein coupled receptor 1 family.

The protein localises to the cell membrane. Functionally, odorant receptor. The protein is Olfactory receptor 52K2 (OR52K2) of Homo sapiens (Human).